We begin with the raw amino-acid sequence, 444 residues long: Prenyltransferase phnF (444 aa).

The protein belongs to the tryptophan dimethylallyltransferase family.

The catalysed reaction is 2,3,4,7,9-pentahydroxy-6-methyl-1H-phenalen-1-one + dimethylallyl diphosphate = 2,4,7,9-tetrahydroxy-6-methyl-8-(2-methylbut-3-en-2-yl)-1-oxo-1H-phenalen-3-ol + diphosphate. Its pathway is secondary metabolite biosynthesis. In terms of biological role, prenyltransferase; part of the gene cluster that mediates the biosynthesis of phenalenones such as herqueinone, compounds that have been reported to treat tumors, bacterial infections and/or mycoses, and rheumatic diseases. The non-reducing polyketide synthase phnA synthesizes the heptaketide backbone and cyclizes it into the angular, hemiketal-containing naphtho-gamma-pyrone prephenalenone. The product template (PT) domain of phnA catalyzes only the C4-C9 aldol condensation, which is unprecedented among known PT domains. The transformation of prephenalenone to phenalenones requires an FAD-dependent monooxygenase phnB, which catalyzes the C2 aromatic hydroxylation of prephenalenone and ring opening of the gamma-pyrone ring simultaneously. Subsequent intramolecular deprotonation of C3 phenolic oxygen accelerates phenalenone ring closure to yield the tricyclic phenalenone core with a C2 hydroxylation. The prenyltransferase phnF further catalyzes reverse C-prenylation of phenalenone by direct electrophilic substitution at C6, or possibly via first a forward O-prenylation of a neighboring phenol in phenalenone, followed by a Claisen rearrangement. The hydroalkoxylation enzyme phnH catalyzes the 5-exo-trig cyclization via acid catalysis after the spontaneous deprotonation of 7-OH, which leads to the formation of the dihydrobenzofuran atrovenetin. Atrovenetin is further converted to deoxyherqueinone by the O-methyltransferase phnC which can methylate C2-OH to stabilize the northern portion of the phenalenone core. Finally, the oxidoreductase phnG converts deoxyherqueinone to herqueinone via C6 hydroxylation. The chain is Prenyltransferase phnF from Penicillium herquei.